A 338-amino-acid polypeptide reads, in one-letter code: Tryptophan--tRNA ligase (338 aa).

ATP is bound by residues 11-13 and 19-20; these read QPS and GN. Positions 12-20 match the 'HIGH' region motif; sequence PSGELSIGN. Asp135 contacts L-tryptophan. ATP-binding positions include 147 to 149, Val189, and 198 to 202; these read GSD and KMSKS. The 'KMSKS' region motif lies at 198–202; sequence KMSKS.

The protein belongs to the class-I aminoacyl-tRNA synthetase family. In terms of assembly, homodimer.

The protein resides in the cytoplasm. It catalyses the reaction tRNA(Trp) + L-tryptophan + ATP = L-tryptophyl-tRNA(Trp) + AMP + diphosphate + H(+). Catalyzes the attachment of tryptophan to tRNA(Trp). This Vibrio parahaemolyticus serotype O3:K6 (strain RIMD 2210633) protein is Tryptophan--tRNA ligase.